A 1216-amino-acid polypeptide reads, in one-letter code: Protein WWC3 (1216 aa).

The segment at 1–63 (MPWLSGGRRR…RESAELPLPA (63 aa)) is disordered. The span at 21-51 (EPPPSAQPQREPPPAPPAAVPTPPAPSAPPP) shows a compositional bias: pro residues. WW domains are found at residues 59–92 (LPLP…DPRD) and 106–139 (DELP…DPRE). Coiled-coil stretches lie at residues 164 to 250 (KEIY…TLQE) and 354 to 468 (DRVR…EATR). 3 disordered regions span residues 487–508 (VSSG…SSRG), 546–612 (GRDA…ADSC), and 634–668 (DLPG…VGGT). Over residues 570–598 (PQSLASLSSRSSLSSLSPPSSPLDTPFLP) the composition is skewed to low complexity. Positions 722 to 847 (SNGDPQIHVG…SLSEMQLRWH (126 aa)) constitute a C2 domain. The stretch at 885-936 (DAVTVLLARTTAQLQAVERELAEERAKLEYTEEEVLEMERKEEQAEAISERS) forms a coiled coil. The interval 1060-1079 (SPFVRNTLERRTLRYKQSCR) is interaction with PRKCZ. A coiled-coil region spans residues 1091–1160 (LDLELDLQAS…RQTRQTKLDY (70 aa)).

The protein belongs to the WWC family. As to quaternary structure, forms homodimers and heterodimers with WWC1 and WWC2. Interacts with DLC1 and PRKCZ. Interacts (via WW domains) with LATS1 and LATS2.

The protein localises to the cytoplasm. It is found in the cytosol. In terms of biological role, regulator of the Hippo signaling pathway, also known as the Salvador-Warts-Hippo (SWH) pathway. Enhances phosphorylation of LATS1 and YAP1 and negatively regulates cell proliferation and organ growth due to a suppression of the transcriptional activity of YAP1, the major effector of the Hippo pathway. The polypeptide is Protein WWC3 (Homo sapiens (Human)).